A 544-amino-acid chain; its full sequence is Pentatricopeptide repeat-containing protein At1g66345, mitochondrial (544 aa).

The N-terminal 116 residues, 1 to 116 (MASALRRLVE…RNLRHGIKSY (116 aa)), are a transit peptide targeting the mitochondrion. PPR repeat units follow at residues 163–197 (TPLVFDLLVQCYAKIRYLELGFDVFKRLCDCGFTL), 198–232 (SVITLNTLIHYSSKSKIDDLVWRIYECAIDKRIYP), 233–267 (NEITIRIMIQVLCKEGRLKEVVDLLDRICGKRCLP), 268–302 (SVIVNTSLVFRVLEEMRIEESMSLLKRLLMKNMVV), 303–337 (DTIGYSIVVYAKAKEGDLVSARKVFDEMLQRGFSA), 338–372 (NSFVYTVFVRVCCEKGDVKEAERLLSEMEESGVSP), 373–407 (YDETFNCLIGGFARFGWEEKGLEYCEVMVTRGLMP), 408–442 (SCSAFNEMVKSVSKIENVNRANEILTKSIDKGFVP), 443–477 (DEHTYSHLIRGFIEGNDIDQALKLFYEMEYRKMSP), 478–512 (GFEVFRSLIVGLCTCGKVEAGEKYLKIMKKRLIEP), and 513–544 (NADIYDALIKAFQKIGDKTNADRVYNEMISVR).

Belongs to the PPR family. P subfamily.

It is found in the mitochondrion. This chain is Pentatricopeptide repeat-containing protein At1g66345, mitochondrial, found in Arabidopsis thaliana (Mouse-ear cress).